Consider the following 273-residue polypeptide: Bifunctional protein FolD (273 aa).

Residues 155–157 (GRS), Ser-180, and Thr-221 each bind NADP(+).

The protein belongs to the tetrahydrofolate dehydrogenase/cyclohydrolase family. As to quaternary structure, homodimer.

It carries out the reaction (6R)-5,10-methylene-5,6,7,8-tetrahydrofolate + NADP(+) = (6R)-5,10-methenyltetrahydrofolate + NADPH. The enzyme catalyses (6R)-5,10-methenyltetrahydrofolate + H2O = (6R)-10-formyltetrahydrofolate + H(+). It functions in the pathway one-carbon metabolism; tetrahydrofolate interconversion. In terms of biological role, catalyzes the oxidation of 5,10-methylenetetrahydrofolate to 5,10-methenyltetrahydrofolate and then the hydrolysis of 5,10-methenyltetrahydrofolate to 10-formyltetrahydrofolate. The polypeptide is Bifunctional protein FolD (Coprothermobacter proteolyticus (strain ATCC 35245 / DSM 5265 / OCM 4 / BT)).